A 207-amino-acid chain; its full sequence is Small ribosomal subunit protein uS4 (207 aa).

The S4 RNA-binding domain occupies 96 to 159 (RRLDNVVYRL…RASTFIADNI (64 aa)).

It belongs to the universal ribosomal protein uS4 family. Part of the 30S ribosomal subunit. Contacts protein S5. The interaction surface between S4 and S5 is involved in control of translational fidelity.

Functionally, one of the primary rRNA binding proteins, it binds directly to 16S rRNA where it nucleates assembly of the body of the 30S subunit. Its function is as follows. With S5 and S12 plays an important role in translational accuracy. In Leptospira borgpetersenii serovar Hardjo-bovis (strain JB197), this protein is Small ribosomal subunit protein uS4.